The chain runs to 102 residues: Beta-defensin 116 (102 aa).

The N-terminal stretch at 1–23 (MSVMKPCLMTIAILMILAQKTPG) is a signal peptide. 3 cysteine pairs are disulfide-bonded: Cys-40-Cys-67, Cys-47-Cys-61, and Cys-51-Cys-68. A disordered region spans residues 83–102 (EDYDSNSNLSVTNSSSYSHI). A compositionally biased stretch (low complexity) spans 87-102 (SNSNLSVTNSSSYSHI).

The protein belongs to the beta-defensin family.

The protein resides in the secreted. In terms of biological role, has antibacterial activity. This chain is Beta-defensin 116 (DEFB116), found in Homo sapiens (Human).